A 472-amino-acid chain; its full sequence is Methanethiol oxidase (472 aa).

Position 2 is an N-acetylalanine (Ala2). Residues Ser111 and Ser467 each carry the phosphoserine modification.

The protein belongs to the selenium-binding protein family. As to quaternary structure, interacts with USP33. The N-terminus is blocked. Highly expressed in liver, kidney and, to a lesser extent, lung.

The protein resides in the nucleus. It is found in the cytoplasm. The protein localises to the cytosol. It localises to the membrane. The enzyme catalyses methanethiol + O2 + H2O = hydrogen sulfide + formaldehyde + H2O2 + H(+). It functions in the pathway organosulfur degradation. Functionally, catalyzes the oxidation of methanethiol, an organosulfur compound known to be produced in substantial amounts by gut bacteria. Selenium-binding protein which may be involved in the sensing of reactive xenobiotics in the cytoplasm. May be involved in intra-Golgi protein transport. In Mus musculus (Mouse), this protein is Methanethiol oxidase (Selenbp1).